The primary structure comprises 228 residues: UPF0134 protein MPN_137 (228 aa).

This sequence belongs to the UPF0134 family.

This is UPF0134 protein MPN_137 from Mycoplasma pneumoniae (strain ATCC 29342 / M129 / Subtype 1) (Mycoplasmoides pneumoniae).